A 323-amino-acid polypeptide reads, in one-letter code: V-type ATP synthase subunit C (323 aa).

This sequence belongs to the V-ATPase V0D/AC39 subunit family.

Its function is as follows. Produces ATP from ADP in the presence of a proton gradient across the membrane. This Thermus thermophilus (strain ATCC BAA-163 / DSM 7039 / HB27) protein is V-type ATP synthase subunit C.